A 236-amino-acid polypeptide reads, in one-letter code: Octanoyltransferase (236 aa).

The 185-residue stretch at 36 to 220 folds into the BPL/LPL catalytic domain; that stretch reads DQVPDTVLLL…HLAAVLGASS (185 aa). Residues 76-83, 150-152, and 163-165 each bind substrate; these read RGGKITWH, AIG, and GFA. Cys181 acts as the Acyl-thioester intermediate in catalysis.

Belongs to the LipB family.

It localises to the cytoplasm. It catalyses the reaction octanoyl-[ACP] + L-lysyl-[protein] = N(6)-octanoyl-L-lysyl-[protein] + holo-[ACP] + H(+). It participates in protein modification; protein lipoylation via endogenous pathway; protein N(6)-(lipoyl)lysine from octanoyl-[acyl-carrier-protein]: step 1/2. Its function is as follows. Catalyzes the transfer of endogenously produced octanoic acid from octanoyl-acyl-carrier-protein onto the lipoyl domains of lipoate-dependent enzymes. Lipoyl-ACP can also act as a substrate although octanoyl-ACP is likely to be the physiological substrate. This chain is Octanoyltransferase, found in Thermobifida fusca (strain YX).